The following is a 313-amino-acid chain: Beta-ketoacyl-[acyl-carrier-protein] synthase III (313 aa).

Catalysis depends on residues Cys-112 and His-238. Residues 239 to 243 (QANIR) are ACP-binding. Asn-268 is a catalytic residue.

The protein belongs to the thiolase-like superfamily. FabH family. Homodimer.

The protein resides in the cytoplasm. The enzyme catalyses malonyl-[ACP] + acetyl-CoA + H(+) = 3-oxobutanoyl-[ACP] + CO2 + CoA. The protein operates within lipid metabolism; fatty acid biosynthesis. Its function is as follows. Catalyzes the condensation reaction of fatty acid synthesis by the addition to an acyl acceptor of two carbons from malonyl-ACP. Catalyzes the first condensation reaction which initiates fatty acid synthesis and may therefore play a role in governing the total rate of fatty acid production. Possesses both acetoacetyl-ACP synthase and acetyl transacylase activities. Its substrate specificity determines the biosynthesis of branched-chain and/or straight-chain of fatty acids. This Staphylococcus saprophyticus subsp. saprophyticus (strain ATCC 15305 / DSM 20229 / NCIMB 8711 / NCTC 7292 / S-41) protein is Beta-ketoacyl-[acyl-carrier-protein] synthase III.